The primary structure comprises 134 residues: UPF0412 protein YaaI (134 aa).

Positions 1 to 23 are cleaved as a signal peptide; it reads MKSVITISASLAISLMLCCTAQA.

This sequence belongs to the UPF0412 family.

The sequence is that of UPF0412 protein YaaI from Escherichia coli (strain UTI89 / UPEC).